The primary structure comprises 541 residues: Peptide chain release factor 3 (541 aa).

The region spanning 14-283 (EARRNFAIIS…AFLDYALKPG (270 aa)) is the tr-type G domain. Residues 23–30 (SHPDAGKT), 91–95 (DTPGH), and 145–148 (NKLD) each bind GTP.

This sequence belongs to the TRAFAC class translation factor GTPase superfamily. Classic translation factor GTPase family. PrfC subfamily.

Its subcellular location is the cytoplasm. Increases the formation of ribosomal termination complexes and stimulates activities of RF-1 and RF-2. It binds guanine nucleotides and has strong preference for UGA stop codons. It may interact directly with the ribosome. The stimulation of RF-1 and RF-2 is significantly reduced by GTP and GDP, but not by GMP. The protein is Peptide chain release factor 3 of Acaryochloris marina (strain MBIC 11017).